The chain runs to 191 residues: Probable protein adenylyltransferase HI_0977 (191 aa).

A Fido domain is found at 37–162 (GSTKGLQQIH…NDLEIRFLLQ (126 aa)). ATP-binding positions include 67–68 (KG), 112–114 (GNG), Arg-118, and Gln-145.

It belongs to the fic family.

The catalysed reaction is L-tyrosyl-[protein] + ATP = O-(5'-adenylyl)-L-tyrosyl-[protein] + diphosphate. The enzyme catalyses L-threonyl-[protein] + ATP = 3-O-(5'-adenylyl)-L-threonyl-[protein] + diphosphate. In terms of biological role, probable adenylyltransferase that mediates the addition of adenosine 5'-monophosphate (AMP) to specific residues of target proteins. This Haemophilus influenzae (strain ATCC 51907 / DSM 11121 / KW20 / Rd) protein is Probable protein adenylyltransferase HI_0977.